The sequence spans 651 residues: p-hydroxybenzoic acid efflux pump subunit AaeB (651 aa).

11 helical membrane passes run 11–31 (FACK…WFEM), 41–61 (AAIV…SGAI), 65–85 (GLLR…IIMT), 91–111 (VVML…SSLV), 117–137 (YVFA…QSSP), 150–170 (EIIL…PRSV), 367–387 (LFWL…LGVV), 404–424 (FLIG…LVLP), 428–448 (QSLL…GIEI), 454–474 (GSLG…PMTF), and 480–500 (LDNA…IMLI).

Belongs to the aromatic acid exporter ArAE (TC 2.A.85) family.

The protein resides in the cell inner membrane. In terms of biological role, forms an efflux pump with AaeA. Could function as a metabolic relief valve, allowing to eliminate certain compounds when they accumulate to high levels in the cell. The protein is p-hydroxybenzoic acid efflux pump subunit AaeB of Musicola paradisiaca (strain Ech703) (Dickeya paradisiaca).